Reading from the N-terminus, the 1026-residue chain is MGSDLLSHLSANDRALFWEYGQGAKAFVPFQCAHHAFEFHAKANPDLTAVEEFETKITYKELDRQANCLATRLRGSGVNVGSRVCLLVERSPWLVIGVLGVLKAGAAYIPFDGNVVSDSTLKHAIQDSAPTVILTLRKFQHRVADAASTEIVYLDETLCTSYNPNHCTKPRDFTSSTNSVYIIYTSGTTGTPKGVNVTHGNVTNLLCIAPGNLGMKPGIKVSQMLNISFDFAAWEILGSMVNGATLCLRGKTSKEWKAVMRNVDILFSTPSMLAPHNPADYPNLSTVVVAGEACPKATADLWGARVKFYNACGPTEVTIANTMQLHTPGDIVTIGGPTPNNSVYVLDENMRPVPIGEPGVMWGGGAGITKGYLNLPDKTAERYVPDPFADDGSMMFNTGDLGRWHSNGTLVHLGRIDNQVKIKGFRVELDGVATAMETCPGVQAATALLIDGELWGFATPASLKPEDIKEAALKVQPYYAVPTRYLTLDEFPETANGKTDKRILRQMALDAKNQEEKPANKAPAQNAAWVNLPTTVIAQAAGAQPPTIPHRSSERSLVSTVGSTVVGSQVKQVDSSASSALEKEEYIWSGYLEDEVPEKTQGRIVRNLRHQIFNLYRRLFSVVFIINMALFIWILVTKDYDAHRLGGIVVANVFIGVLMRQEMVINTLFIIFTAVPPSWPLCIRRVCARIYTIGGIHSGAGVSAFVWLVAFTAQATKEMINKGKTSVRTVAITYVILAELLGILIFAYPALRKKMHDTFENTHRYLGWTALALVWIQFMFLTIDYLPEGQTLGQTLVKSPHFWLVIIFTISIIWPWFRLRKVDCRPEVLSNHAVRLWFDYGVTPDAGTFVRLSDAPLKEWHGFASISIPGRTGYSVVVSRAGDWTSKHINDPPTKMWVKGVPTYGVLKLVPMFRRMVLVATGSGIGPCAPAILRRQIPMRVLWTAPNVRETFGDNLCNSILEACPDAVIYDTRKHGKPDMVKLVLRLVKEFDAEAVAIISNQPLTEKVVYGCMSRGIPAFGAIWDS.

The segment at 37–422 is adenylation (A) domain; sequence FEFHAKANPD…LGRIDNQVKI (386 aa). AMP-binding positions include 332–333 and 412–415; these read VT and HLGR. A thiolation and peptide carrier (T) domain region spans residues 556–638; sequence SLVSTVGSTV…ALFIWILVTK (83 aa). The reductase (R) domain stretch occupies residues 682-901; it reads CIRRVCARIY…PPTKMWVKGV (220 aa). NADP(+)-binding positions include 685-688, 769-771, and tyrosine 840; these read RVCA and TAL.

This sequence belongs to the adenylate-forming reductase family.

In terms of biological role, adenylate-forming reductase, a natural product biosynthesis enzyme that resembles non-ribosomal peptide synthetases, yet serves to modify one substrate, rather than to condense two or more building blocks. The A-domain preferentially accepts L-serine, L-alanine and L-valine as substrates. The natural product of the enzyme is not yet known. This Coprinopsis cinerea (strain Okayama-7 / 130 / ATCC MYA-4618 / FGSC 9003) (Inky cap fungus) protein is Adenylate-forming reductase 06235.